A 388-amino-acid chain; its full sequence is UPF0496 protein 1 (388 aa).

Positions 1-25 are disordered; it reads MGNSSSSGSHRPPRPASSESALPPA. Residues 198–227 adopt a coiled-coil conformation; that stretch reads QAVYRQQLTMLEKLQQRKHRLDKKVRAIKA. 2 helical membrane passes run 234 to 254 and 257 to 277; these read IIFA…AAIA and PVAA…GKWI. Residues 344-376 are a coiled coil; it reads VEEIKKKLEVFMKSVEDLGEQADRCSRDIRRAR.

The protein belongs to the UPF0496 family.

Its subcellular location is the membrane. This is UPF0496 protein 1 from Oryza sativa subsp. japonica (Rice).